Reading from the N-terminus, the 589-residue chain is Muscarinic acetylcholine receptor M3 (589 aa).

At 1-66 the chain is on the extracellular side; it reads MTLHSNSTTS…DPLGGHTIWQ (66 aa). 5 N-linked (GlcNAc...) asparagine glycosylation sites follow: Asn-6, Asn-15, Asn-41, Asn-48, and Asn-52. The helical transmembrane segment at 67 to 90 threads the bilayer; it reads VVFIAFLTGFLALVTIIGNILVIV. Over 91-103 the chain is Cytoplasmic; it reads AFKVNKQLKTVNN. The chain crosses the membrane as a helical span at residues 104–129; sequence YFLLSLACADLIIGVISMNLFTTYII. Over 130–141 the chain is Extracellular; that stretch reads MNRWALGNLACD. Residues Cys-140 and Cys-220 are joined by a disulfide bond. Residues 142 to 163 traverse the membrane as a helical segment; the sequence is LWLSIDYVASNASVMNLLVISF. The Cytoplasmic portion of the chain corresponds to 164-183; that stretch reads DRYFSITRPLTYRAKRTTKR. A helical transmembrane segment spans residues 184–205; that stretch reads AGVMIGLAWVISFVLWAPAILF. The Extracellular segment spans residues 206–228; sequence WQYFVGKRTVPPGECFIQFLSEP. A helical transmembrane segment spans residues 229–251; that stretch reads TITFGTAIAAFYMPVTIMTILYW. Residues 252–490 lie on the Cytoplasmic side of the membrane; the sequence is RIYKETEKRT…SLIKEKKAAQ (239 aa). The short motif at 274-280 is the Basolateral sorting signal element; sequence AEAENFV. Positions 323 to 356 are disordered; that stretch reads AEQMDQDHSSSDSWNNNDAAASLENSASSDEEDI. The span at 333 to 344 shows a compositional bias: low complexity; it reads SDSWNNNDAAAS. Phosphoserine is present on Ser-384. Residues 491-513 form a helical membrane-spanning segment; it reads TLSAILLAFIITWTPYNIMVLVN. The Extracellular segment spans residues 514 to 525; the sequence is TFCDSCIPKTYW. Cys-516 and Cys-519 are oxidised to a cystine. A helical transmembrane segment spans residues 526–545; sequence NLGYWLCYINSTVNPVCYAL. Topologically, residues 546-589 are cytoplasmic; the sequence is CNKTFRTTFKTLLLCQCDKRKRRKQQYQQRQSVIFHKRVPEQAL.

This sequence belongs to the G-protein coupled receptor 1 family. Muscarinic acetylcholine receptor subfamily. CHRM3 sub-subfamily. Homodimer; the dimers can form tetramers. Interacts with NALCN. Interacts with TMEM147.

The protein localises to the cell membrane. The protein resides in the postsynaptic cell membrane. Its subcellular location is the basolateral cell membrane. It is found in the endoplasmic reticulum membrane. In terms of biological role, the muscarinic acetylcholine receptor mediates various cellular responses, including inhibition of adenylate cyclase, breakdown of phosphoinositides and modulation of potassium channels through the action of G proteins. Primary transducing effect is Pi turnover. In Rattus norvegicus (Rat), this protein is Muscarinic acetylcholine receptor M3 (Chrm3).